We begin with the raw amino-acid sequence, 519 residues long: Protein nucleotidyltransferase YdiU (519 aa).

8 residues coordinate ATP: Gly-101, Gly-103, Arg-104, Lys-124, Asp-136, Gly-137, Arg-194, and Arg-201. Asp-271 functions as the Proton acceptor in the catalytic mechanism. Mg(2+) is bound by residues Asn-272 and Asp-281. Asp-281 provides a ligand contact to ATP.

The protein belongs to the SELO family. It depends on Mg(2+) as a cofactor. Requires Mn(2+) as cofactor.

The enzyme catalyses L-seryl-[protein] + ATP = 3-O-(5'-adenylyl)-L-seryl-[protein] + diphosphate. It catalyses the reaction L-threonyl-[protein] + ATP = 3-O-(5'-adenylyl)-L-threonyl-[protein] + diphosphate. It carries out the reaction L-tyrosyl-[protein] + ATP = O-(5'-adenylyl)-L-tyrosyl-[protein] + diphosphate. The catalysed reaction is L-histidyl-[protein] + UTP = N(tele)-(5'-uridylyl)-L-histidyl-[protein] + diphosphate. The enzyme catalyses L-seryl-[protein] + UTP = O-(5'-uridylyl)-L-seryl-[protein] + diphosphate. It catalyses the reaction L-tyrosyl-[protein] + UTP = O-(5'-uridylyl)-L-tyrosyl-[protein] + diphosphate. Functionally, nucleotidyltransferase involved in the post-translational modification of proteins. It can catalyze the addition of adenosine monophosphate (AMP) or uridine monophosphate (UMP) to a protein, resulting in modifications known as AMPylation and UMPylation. This chain is Protein nucleotidyltransferase YdiU, found in Azoarcus sp. (strain BH72).